A 537-amino-acid polypeptide reads, in one-letter code: CTP synthase (537 aa).

Residues 1-265 form an amidoligase domain region; the sequence is MVHFIFVTGG…DNKVLKFFNI (265 aa). Ser13 contributes to the CTP binding site. Residue Ser13 participates in UTP binding. Residues 14-19 and Asp71 contribute to the ATP site; that span reads SLGKGL. Mg(2+) contacts are provided by Asp71 and Glu139. Residues 146-148 and Lys222 each bind CTP; that span reads DIE. Lys222 serves as a coordination point for UTP. In terms of domain architecture, Glutamine amidotransferase type-1 spans 290 to 536; the sequence is RIAIIAKYHK…IKAAIEYNKC (247 aa). Gly352 provides a ligand contact to L-glutamine. Catalysis depends on Cys379, which acts as the Nucleophile; for glutamine hydrolysis. L-glutamine is bound by residues 380–383, Glu403, and Arg464; that span reads FGMQ. Active-site residues include His509 and Glu511.

This sequence belongs to the CTP synthase family. In terms of assembly, homotetramer.

The enzyme catalyses UTP + L-glutamine + ATP + H2O = CTP + L-glutamate + ADP + phosphate + 2 H(+). The catalysed reaction is L-glutamine + H2O = L-glutamate + NH4(+). It carries out the reaction UTP + NH4(+) + ATP = CTP + ADP + phosphate + 2 H(+). Its pathway is pyrimidine metabolism; CTP biosynthesis via de novo pathway; CTP from UDP: step 2/2. With respect to regulation, allosterically activated by GTP, when glutamine is the substrate; GTP has no effect on the reaction when ammonia is the substrate. The allosteric effector GTP functions by stabilizing the protein conformation that binds the tetrahedral intermediate(s) formed during glutamine hydrolysis. Inhibited by the product CTP, via allosteric rather than competitive inhibition. Catalyzes the ATP-dependent amination of UTP to CTP with either L-glutamine or ammonia as the source of nitrogen. Regulates intracellular CTP levels through interactions with the four ribonucleotide triphosphates. This chain is CTP synthase, found in Rickettsia rickettsii (strain Iowa).